Here is a 579-residue protein sequence, read N- to C-terminus: Peptidyl-prolyl cis-trans isomerase-like 2 (579 aa).

In terms of domain architecture, U-box spans 42–115; that stretch reads RRLPFNFCSL…GEYVDPVTYK (74 aa). The disordered stretch occupies residues 227–261; that stretch reads AERAQRAESGAASKGLTKPGMSATAASQKTVSHQA. Polar residues predominate over residues 250–259; the sequence is TAASQKTVSH. In terms of domain architecture, PPIase cyclophilin-type spans 311–470; sequence QKGYARISTT…PDIRIKDVTI (160 aa). Residues 555–579 form a disordered region; sequence EGPEPEPAKKKFKGGGGFGDFSSWD.

It belongs to the cyclophilin-type PPIase family. PPIL2 subfamily.

It localises to the nucleus. It catalyses the reaction [protein]-peptidylproline (omega=180) = [protein]-peptidylproline (omega=0). The catalysed reaction is S-ubiquitinyl-[E2 ubiquitin-conjugating enzyme]-L-cysteine + [acceptor protein]-L-lysine = [E2 ubiquitin-conjugating enzyme]-L-cysteine + N(6)-ubiquitinyl-[acceptor protein]-L-lysine.. Its pathway is protein modification; protein ubiquitination. Its function is as follows. May catalyze the cis-trans isomerization of proline imidic peptide bonds in oligopeptides thereby assisting the folding of proteins. May also function as a chaperone, playing a role in intracellular transport of proteins. May also have a protein ubiquitin ligase activity acting as an E3 ubiquitin protein ligase or as a ubiquitin-ubiquitin ligase promoting elongation of ubiquitin chains on proteins. This chain is Peptidyl-prolyl cis-trans isomerase-like 2 (cyp8), found in Aspergillus fumigatus (strain ATCC MYA-4609 / CBS 101355 / FGSC A1100 / Af293) (Neosartorya fumigata).